The following is an 86-amino-acid chain: Large ribosomal subunit protein bL31B (86 aa).

Belongs to the bacterial ribosomal protein bL31 family. Type B subfamily. In terms of assembly, part of the 50S ribosomal subunit.

This Cupriavidus pinatubonensis (strain JMP 134 / LMG 1197) (Cupriavidus necator (strain JMP 134)) protein is Large ribosomal subunit protein bL31B.